Here is a 334-residue protein sequence, read N- to C-terminus: Mitochondrial glycine transporter (334 aa).

3 Solcar repeats span residues serine 22–glycine 106, leucine 135–arginine 219, and serine 237–arginine 321. The next 6 membrane-spanning stretches (helical) occupy residues phenylalanine 28–glutamine 53, glycine 81–isoleucine 107, leucine 141–glutamate 166, glycine 194–lysine 217, isoleucine 241–leucine 267, and glycine 296–valine 314.

This sequence belongs to the mitochondrial carrier (TC 2.A.29) family. SLC25A38 subfamily.

It is found in the mitochondrion inner membrane. It carries out the reaction glycine(in) = glycine(out). Mitochondrial glycine transporter that imports glycine into the mitochondrial matrix. Plays an important role in providing glycine for the first enzymatic step in heme biosynthesis, the condensation of glycine with succinyl-CoA to produce 5-aminolevulinate (ALA) in the mitochondrial matrix. This is Mitochondrial glycine transporter from Aspergillus clavatus (strain ATCC 1007 / CBS 513.65 / DSM 816 / NCTC 3887 / NRRL 1 / QM 1276 / 107).